Here is a 278-residue protein sequence, read N- to C-terminus: Translation initiation factor IF-3, mitochondrial (278 aa).

Residues 1 to 31 constitute a mitochondrion transit peptide; that stretch reads MAALFLKRLTLQTVKSENSCIRCFGKHILQK. Residues 249-278 are disordered; the sequence is KAYKETQETQERDTLNKDHGNDKESNVLHQ.

Belongs to the IF-3 family.

The protein localises to the mitochondrion. In terms of biological role, IF-3 binds to the 28S ribosomal subunit and shifts the equilibrium between 55S ribosomes and their 39S and 28S subunits in favor of the free subunits, thus enhancing the availability of 28S subunits on which protein synthesis initiation begins. The sequence is that of Translation initiation factor IF-3, mitochondrial (MTIF3) from Homo sapiens (Human).